Consider the following 43-residue polypeptide: Protein PsbN (43 aa).

A helical transmembrane segment spans residues 7–27 (LIVAIAAVTICITAFAIYTAF).

It belongs to the PsbN family.

The protein localises to the cellular thylakoid membrane. Functionally, may play a role in photosystem I and II biogenesis. The protein is Protein PsbN of Synechococcus sp. (strain JA-2-3B'a(2-13)) (Cyanobacteria bacterium Yellowstone B-Prime).